A 200-amino-acid polypeptide reads, in one-letter code: Guanylate kinase (200 aa).

A Guanylate kinase-like domain is found at 6–184 (GLLIVLSGPS…AVDKLKSILL (179 aa)). 13–20 (GPSGAGKG) lines the ATP pocket.

This sequence belongs to the guanylate kinase family.

The protein resides in the cytoplasm. The catalysed reaction is GMP + ATP = GDP + ADP. Functionally, essential for recycling GMP and indirectly, cGMP. The polypeptide is Guanylate kinase (Desulfitobacterium hafniense (strain Y51)).